The primary structure comprises 375 residues: Succinyl-diaminopimelate desuccinylase (375 aa).

His-66 contributes to the Zn(2+) binding site. The active site involves Asp-68. Asp-99 is a binding site for Zn(2+). Glu-133 (proton acceptor) is an active-site residue. Glu-134, Glu-162, and His-348 together coordinate Zn(2+).

Belongs to the peptidase M20A family. DapE subfamily. Homodimer. The cofactor is Zn(2+). It depends on Co(2+) as a cofactor.

The catalysed reaction is N-succinyl-(2S,6S)-2,6-diaminopimelate + H2O = (2S,6S)-2,6-diaminopimelate + succinate. The protein operates within amino-acid biosynthesis; L-lysine biosynthesis via DAP pathway; LL-2,6-diaminopimelate from (S)-tetrahydrodipicolinate (succinylase route): step 3/3. In terms of biological role, catalyzes the hydrolysis of N-succinyl-L,L-diaminopimelic acid (SDAP), forming succinate and LL-2,6-diaminopimelate (DAP), an intermediate involved in the bacterial biosynthesis of lysine and meso-diaminopimelic acid, an essential component of bacterial cell walls. The sequence is that of Succinyl-diaminopimelate desuccinylase from Salmonella dublin (strain CT_02021853).